The following is a 263-amino-acid chain: tRNA pseudouridine synthase A (263 aa).

Asp-57 functions as the Nucleophile in the catalytic mechanism. Tyr-115 lines the substrate pocket.

Belongs to the tRNA pseudouridine synthase TruA family. In terms of assembly, homodimer.

It catalyses the reaction uridine(38/39/40) in tRNA = pseudouridine(38/39/40) in tRNA. Its function is as follows. Formation of pseudouridine at positions 38, 39 and 40 in the anticodon stem and loop of transfer RNAs. This is tRNA pseudouridine synthase A from Buchnera aphidicola subsp. Schizaphis graminum (strain Sg).